Reading from the N-terminus, the 199-residue chain is Dephospho-CoA kinase (199 aa).

Residues 4 to 199 (VIGLTGGIAS…DNVLQKWNIS (196 aa)) enclose the DPCK domain. 12 to 17 (ASGKST) contributes to the ATP binding site.

This sequence belongs to the CoaE family.

The protein resides in the cytoplasm. The enzyme catalyses 3'-dephospho-CoA + ATP = ADP + CoA + H(+). It functions in the pathway cofactor biosynthesis; coenzyme A biosynthesis; CoA from (R)-pantothenate: step 5/5. Its function is as follows. Catalyzes the phosphorylation of the 3'-hydroxyl group of dephosphocoenzyme A to form coenzyme A. The sequence is that of Dephospho-CoA kinase from Oceanobacillus iheyensis (strain DSM 14371 / CIP 107618 / JCM 11309 / KCTC 3954 / HTE831).